The primary structure comprises 432 residues: Peptidyl-prolyl cis-trans isomerase cyp6 (432 aa).

The 168-residue stretch at M1–I168 folds into the PPIase cyclophilin-type domain. At S206 the chain carries Phosphoserine. The RRM domain occupies N244–S322. Residues Y330 to R432 form a disordered region. Basic and acidic residues-rich tracts occupy residues S341–R366, D373–S395, and N406–R432.

The protein belongs to the cyclophilin-type PPIase family. PPIL4 subfamily.

Its subcellular location is the nucleus. It catalyses the reaction [protein]-peptidylproline (omega=180) = [protein]-peptidylproline (omega=0). Its function is as follows. PPIases accelerate the folding of proteins. It catalyzes the cis-trans isomerization of proline imidic peptide bonds in oligopeptides. The protein is Peptidyl-prolyl cis-trans isomerase cyp6 (cyp6) of Schizosaccharomyces pombe (strain 972 / ATCC 24843) (Fission yeast).